A 90-amino-acid chain; its full sequence is Co-chaperonin GroES (90 aa).

Belongs to the GroES chaperonin family. Heptamer of 7 subunits arranged in a ring. Interacts with the chaperonin GroEL.

It is found in the cytoplasm. In terms of biological role, together with the chaperonin GroEL, plays an essential role in assisting protein folding. The GroEL-GroES system forms a nano-cage that allows encapsulation of the non-native substrate proteins and provides a physical environment optimized to promote and accelerate protein folding. GroES binds to the apical surface of the GroEL ring, thereby capping the opening of the GroEL channel. This is Co-chaperonin GroES from Bacteroides fragilis (strain ATCC 25285 / DSM 2151 / CCUG 4856 / JCM 11019 / LMG 10263 / NCTC 9343 / Onslow / VPI 2553 / EN-2).